Reading from the N-terminus, the 327-residue chain is tRNA N6-adenosine threonylcarbamoyltransferase (327 aa).

Residues histidine 109 and histidine 113 each contribute to the Fe cation site. Residues 132–136 (MVSGG), aspartate 165, glycine 178, aspartate 182, and asparagine 268 contribute to the substrate site. Position 296 (aspartate 296) interacts with Fe cation.

Belongs to the KAE1 / TsaD family. Requires Fe(2+) as cofactor.

It is found in the cytoplasm. It catalyses the reaction L-threonylcarbamoyladenylate + adenosine(37) in tRNA = N(6)-L-threonylcarbamoyladenosine(37) in tRNA + AMP + H(+). Required for the formation of a threonylcarbamoyl group on adenosine at position 37 (t(6)A37) in tRNAs that read codons beginning with adenine. Is involved in the transfer of the threonylcarbamoyl moiety of threonylcarbamoyl-AMP (TC-AMP) to the N6 group of A37, together with TsaE and TsaB. TsaD likely plays a direct catalytic role in this reaction. The sequence is that of tRNA N6-adenosine threonylcarbamoyltransferase from Thermotoga neapolitana (strain ATCC 49049 / DSM 4359 / NBRC 107923 / NS-E).